The sequence spans 131 residues: uncharacterized protein (131 aa).

The tract at residues 101-131 (SWWPPSGVVRGGPSSWPPSGVAEPREALGLP) is disordered.

This is an uncharacterized protein from Homo sapiens (Human).